Here is a 96-residue protein sequence, read N- to C-terminus: MELRVIERTDTELRIEVAGEDHTFMNVIKGALLQTDGVAAATYDVNPEQSGGQTEPVLSIQTEPDADVDPLDALGDASRQVQTTVDDFTSAFTAAV.

This sequence belongs to the archaeal Rpo11/eukaryotic RPB11/RPC19 RNA polymerase subunit family. As to quaternary structure, part of the RNA polymerase complex.

The protein resides in the cytoplasm. It catalyses the reaction RNA(n) + a ribonucleoside 5'-triphosphate = RNA(n+1) + diphosphate. Functionally, DNA-dependent RNA polymerase (RNAP) catalyzes the transcription of DNA into RNA using the four ribonucleoside triphosphates as substrates. The protein is DNA-directed RNA polymerase subunit Rpo11 of Haloquadratum walsbyi (strain DSM 16790 / HBSQ001).